The sequence spans 220 residues: SAGA-associated factor 11 homolog (220 aa).

A disordered region spans residues 1-38 (MSTGTANSAVSSKSTNSTTSTSKVPVNEKSNNSQNANT). The SGF11-type zinc finger occupies 126–147 (CTCPNCDRPVSAARFAPHLEKC). 2 stretches are compositionally biased toward low complexity: residues 160 to 177 (RRLA…SSSS) and 204 to 220 (SQNS…GKTF). The interval 160 to 220 (RRLATKESNS…GSKKNNGKTF (61 aa)) is disordered.

It belongs to the SGF11 family. Component of some SAGA transcription coactivator-HAT complexes. Within the SAGA complex, participates in a subcomplex of SAGA called the DUB module (deubiquitination module).

Its subcellular location is the nucleus. Component of the transcription regulatory histone acetylation (HAT) complex SAGA, a multiprotein complex that activates transcription by remodeling chromatin and mediating histone acetylation and deubiquitination. Within the SAGA complex, participates in a subcomplex that specifically deubiquitinates histone H2B. The SAGA complex is recruited to specific gene promoters by activators, where it is required for transcription. This Musca domestica (House fly) protein is SAGA-associated factor 11 homolog.